We begin with the raw amino-acid sequence, 82 residues long: Diphthamide biosynthesis protein 3 (82 aa).

The 57-residue stretch at 4–60 folds into the DPH-type MB domain; it reads FHDEVEIEDFQYDEDSETYFYPCPCGDNFAITKEDLENGEDVATCPSCSLIIKVIYD. C26, C28, C48, and C51 together coordinate Fe cation.

This sequence belongs to the DPH3 family. Component of the 2-(3-amino-3-carboxypropyl)histidine synthase complex composed of DPH1, DPH2, DPH3 and a NADH-dependent reductase. Interacts with SERGEF. The cofactor is Fe(2+). In terms of tissue distribution, widely expressed with highest levels in heart, liver, kidney and testis.

It is found in the cytoplasm. It localises to the nucleus. The enzyme catalyses [3Fe-4S](1+)-[protein] + Fe(2+)-[Dph3] = [3Fe-4S](0)-[protein] + Fe(3+)-[Dph3]. It catalyses the reaction 2 [3Fe-4S](0)-[protein] + 2 Fe(2+)-[Dph3] + NADH = 2 [4Fe-4S](1+)-[protein] + 2 [Dph3] + NAD(+) + H(+). It participates in protein modification; peptidyl-diphthamide biosynthesis. Required for the first step of diphthamide biosynthesis, a post-translational modification of histidine which occurs in elongation factor 2. DPH1 and DPH2 transfer a 3-amino-3-carboxypropyl (ACP) group from S-adenosyl-L-methionine (SAM) to a histidine residue, the reaction is assisted by a reduction system comprising DPH3 and a NADH-dependent reductase. Acts as an electron donor to reduce the Fe-S cluster in DPH1-DPH2 keeping the [4Fe-4S] clusters in the active and reduced state. Restores iron to DPH1-DPH2 iron-sulfur clusters which have degraded from [4Fe-4S] to [3Fe-4S] by donating an iron atom to reform [4Fe-4S] clusters, in a manner dependent on the presence of elongation factor 2 and SAM. Associates with the elongator complex and is required for tRNA Wobble base modifications mediated by the elongator complex. The elongator complex is required for multiple tRNA modifications, including mcm5U (5-methoxycarbonylmethyl uridine), mcm5s 2U (5-methoxycarbonylmethyl-2-thiouridine), and ncm5U (5-carbamoylmethyl uridine). This chain is Diphthamide biosynthesis protein 3, found in Mus musculus (Mouse).